Consider the following 463-residue polypeptide: Argininosuccinate lyase (463 aa).

It belongs to the lyase 1 family. Argininosuccinate lyase subfamily.

Its subcellular location is the cytoplasm. It carries out the reaction 2-(N(omega)-L-arginino)succinate = fumarate + L-arginine. Its pathway is amino-acid biosynthesis; L-arginine biosynthesis; L-arginine from L-ornithine and carbamoyl phosphate: step 3/3. In Prochlorococcus marinus (strain NATL1A), this protein is Argininosuccinate lyase.